The sequence spans 363 residues: UDP-3-O-acylglucosamine N-acyltransferase (363 aa).

H266 acts as the Proton acceptor in catalysis.

The protein belongs to the transferase hexapeptide repeat family. LpxD subfamily. Homotrimer.

It carries out the reaction a UDP-3-O-[(3R)-3-hydroxyacyl]-alpha-D-glucosamine + a (3R)-hydroxyacyl-[ACP] = a UDP-2-N,3-O-bis[(3R)-3-hydroxyacyl]-alpha-D-glucosamine + holo-[ACP] + H(+). It participates in bacterial outer membrane biogenesis; LPS lipid A biosynthesis. Functionally, catalyzes the N-acylation of UDP-3-O-acylglucosamine using 3-hydroxyacyl-ACP as the acyl donor. Is involved in the biosynthesis of lipid A, a phosphorylated glycolipid that anchors the lipopolysaccharide to the outer membrane of the cell. The sequence is that of UDP-3-O-acylglucosamine N-acyltransferase from Bordetella parapertussis (strain 12822 / ATCC BAA-587 / NCTC 13253).